A 704-amino-acid polypeptide reads, in one-letter code: Elongation factor G (704 aa).

The region spanning 8 to 290 is the tr-type G domain; that stretch reads ARYRNIGISA…AVIDYLPSPV (283 aa). GTP-binding positions include 17–24, 88–92, and 142–145; these read AHIDAGKT, DTPGH, and NKMD. An N6-acetyllysine mark is found at Lys-504 and Lys-643.

This sequence belongs to the TRAFAC class translation factor GTPase superfamily. Classic translation factor GTPase family. EF-G/EF-2 subfamily.

Its subcellular location is the cytoplasm. In terms of biological role, catalyzes the GTP-dependent ribosomal translocation step during translation elongation. During this step, the ribosome changes from the pre-translocational (PRE) to the post-translocational (POST) state as the newly formed A-site-bound peptidyl-tRNA and P-site-bound deacylated tRNA move to the P and E sites, respectively. Catalyzes the coordinated movement of the two tRNA molecules, the mRNA and conformational changes in the ribosome. This Shigella sonnei (strain Ss046) protein is Elongation factor G.